We begin with the raw amino-acid sequence, 121 residues long: Large ribosomal subunit protein bL19 (121 aa).

This sequence belongs to the bacterial ribosomal protein bL19 family.

Functionally, this protein is located at the 30S-50S ribosomal subunit interface and may play a role in the structure and function of the aminoacyl-tRNA binding site. This Mesomycoplasma hyopneumoniae (strain 232) (Mycoplasma hyopneumoniae) protein is Large ribosomal subunit protein bL19.